We begin with the raw amino-acid sequence, 460 residues long: Heme sensor protein HssS (460 aa).

The next 2 helical transmembrane spans lie at 11-31 (IYTITVMIFSAVASFLCTNII) and 164-184 (IFLAILITLLLLFSIILVISS). The region spanning 186-238 (YAIIKPIQQLKRATERLMHGNFDEVIHVTRKDEFGTLQYRFDKMRLSLKQLDD) is the HAMP domain. The region spanning 246 to 456 (NVSHEIKTPL…TFTITFKKVP (211 aa)) is the Histidine kinase domain. At H249 the chain carries Phosphohistidine; by autocatalysis.

Autophosphorylated.

The protein localises to the cell membrane. It carries out the reaction ATP + protein L-histidine = ADP + protein N-phospho-L-histidine.. Functionally, member of the two-component regulatory system HssS/HssR involved in intracellular heme homeostasis and tempering of staphylococcal virulence. HssS functions as a heme sensor histidine kinase which is autophosphorylated at a histidine residue and transfers its phosphate group to an aspartate residue of HssR. HssR/HssS activates the expression of hrtAB, an efflux pump, in response to extracellular heme, hemin, hemoglobin or blood. The protein is Heme sensor protein HssS (hssS) of Staphylococcus saprophyticus subsp. saprophyticus (strain ATCC 15305 / DSM 20229 / NCIMB 8711 / NCTC 7292 / S-41).